Here is a 565-residue protein sequence, read N- to C-terminus: Dihydroxy-acid dehydratase (565 aa).

Cysteine 53 is a binding site for [2Fe-2S] cluster. Position 85 (aspartate 85) interacts with Mg(2+). Cysteine 126 is a binding site for [2Fe-2S] cluster. The Mg(2+) site is built by aspartate 127 and lysine 128. Lysine 128 carries the post-translational modification N6-carboxylysine. Residue cysteine 198 participates in [2Fe-2S] cluster binding. Glutamate 450 lines the Mg(2+) pocket. Serine 476 functions as the Proton acceptor in the catalytic mechanism.

Belongs to the IlvD/Edd family. In terms of assembly, homodimer. Requires [2Fe-2S] cluster as cofactor. It depends on Mg(2+) as a cofactor.

The enzyme catalyses (2R)-2,3-dihydroxy-3-methylbutanoate = 3-methyl-2-oxobutanoate + H2O. The catalysed reaction is (2R,3R)-2,3-dihydroxy-3-methylpentanoate = (S)-3-methyl-2-oxopentanoate + H2O. It participates in amino-acid biosynthesis; L-isoleucine biosynthesis; L-isoleucine from 2-oxobutanoate: step 3/4. Its pathway is amino-acid biosynthesis; L-valine biosynthesis; L-valine from pyruvate: step 3/4. In terms of biological role, functions in the biosynthesis of branched-chain amino acids. Catalyzes the dehydration of (2R,3R)-2,3-dihydroxy-3-methylpentanoate (2,3-dihydroxy-3-methylvalerate) into 2-oxo-3-methylpentanoate (2-oxo-3-methylvalerate) and of (2R)-2,3-dihydroxy-3-methylbutanoate (2,3-dihydroxyisovalerate) into 2-oxo-3-methylbutanoate (2-oxoisovalerate), the penultimate precursor to L-isoleucine and L-valine, respectively. In Synechococcus sp. (strain JA-2-3B'a(2-13)) (Cyanobacteria bacterium Yellowstone B-Prime), this protein is Dihydroxy-acid dehydratase.